Here is a 58-residue protein sequence, read N- to C-terminus: Small ribosomal subunit protein bS21 (58 aa).

It belongs to the bacterial ribosomal protein bS21 family.

This is Small ribosomal subunit protein bS21 from Streptococcus pyogenes serotype M49 (strain NZ131).